We begin with the raw amino-acid sequence, 299 residues long: Protoheme IX farnesyltransferase (299 aa).

9 helical membrane-spanning segments follow: residues 17 to 37 (VVAL…PAPY), 41 to 61 (GLLV…AAVF), 91 to 111 (ALMW…LFVN), 113 to 133 (ITMV…TLYL), 141 to 161 (IVIG…AVSG), 168 to 188 (ACLL…ALAI), 207 to 227 (GLAY…LVSL), 228 to 248 (LPYL…ALGI), and 266 to 286 (IAWC…VTLL).

This sequence belongs to the UbiA prenyltransferase family. Protoheme IX farnesyltransferase subfamily.

The protein resides in the cell inner membrane. It catalyses the reaction heme b + (2E,6E)-farnesyl diphosphate + H2O = Fe(II)-heme o + diphosphate. The protein operates within porphyrin-containing compound metabolism; heme O biosynthesis; heme O from protoheme: step 1/1. In terms of biological role, converts heme B (protoheme IX) to heme O by substitution of the vinyl group on carbon 2 of heme B porphyrin ring with a hydroxyethyl farnesyl side group. The sequence is that of Protoheme IX farnesyltransferase from Ruthia magnifica subsp. Calyptogena magnifica.